The sequence spans 138 residues: Ribosome maturation factor RimP (138 aa).

Belongs to the RimP family.

Its subcellular location is the cytoplasm. Functionally, required for maturation of 30S ribosomal subunits. This is Ribosome maturation factor RimP from Campylobacter curvus (strain 525.92).